Consider the following 213-residue polypeptide: Orotate phosphoribosyltransferase (213 aa).

A 5-phospho-alpha-D-ribose 1-diphosphate-binding site is contributed by K26. 34 to 35 (FF) is a binding site for orotate. Residues 72–73 (YK), R99, K100, K103, H105, and 124–132 (DDVITAGTA) contribute to the 5-phospho-alpha-D-ribose 1-diphosphate site. Orotate-binding residues include T128 and R156.

This sequence belongs to the purine/pyrimidine phosphoribosyltransferase family. PyrE subfamily. As to quaternary structure, homodimer. It depends on Mg(2+) as a cofactor.

It catalyses the reaction orotidine 5'-phosphate + diphosphate = orotate + 5-phospho-alpha-D-ribose 1-diphosphate. Its pathway is pyrimidine metabolism; UMP biosynthesis via de novo pathway; UMP from orotate: step 1/2. Its function is as follows. Catalyzes the transfer of a ribosyl phosphate group from 5-phosphoribose 1-diphosphate to orotate, leading to the formation of orotidine monophosphate (OMP). The chain is Orotate phosphoribosyltransferase from Vibrio vulnificus (strain YJ016).